The primary structure comprises 2672 residues: eIF-2-alpha kinase activator GCN1 (2672 aa).

HEAT repeat units lie at residues 5–42 (LNWE…QETL), 79–117 (NLEP…WINS), 174–211 (CIFQ…YSKL), 227–267 (QAAL…NPPS), 329–366 (FASS…KISN), 372–410 (EDLT…THYE), 509–549 (HGHA…NSSI), 611–648 (KYVT…IFNI), 706–745 (IQPN…EEGV), 902–932 (QDYL…IDSI), and 933–970 (SLTY…EEDE). Residues 975–994 (LLLAMEIISVHAEAFEDPSI) form an HEAT 12; degenerate repeat. One copy of the HEAT 13; degenerate repeat lies at 995-1030 (PRISIVEVLLSLLSLPSKAKIAKDCFNALCQSISVA). 32 HEAT repeats span residues 1031 to 1067 (PNQE…LEPF), 1099 to 1138 (VVND…FTSE), 1185 to 1224 (STVA…REPI), 1243 to 1281 (QNSK…HLQQ), 1284 to 1321 (ARIH…QFKQ), 1363 to 1401 (LSEF…SLGK), 1405 to 1442 (PYVI…HTTG), 1444 to 1480 (GVKK…LDPT), 1484 to 1521 (ASLS…VIRN), 1523 to 1559 (EIQK…HYID), 1561 to 1598 (PSLA…LVDT), 1603 to 1640 (PYLQ…RLGE), 1641 to 1679 (EQFP…GLGL), 1681 to 1717 (KLDE…CFGS), 1721 to 1758 (PYIN…NYAT), 1760 to 1796 (AVDL…QVTG), 1825 to 1862 (DRRD…NTPR), 1863 to 1903 (AVKE…RVGG), 1905 to 1942 (ALSQ…SAST), 1947 to 1984 (QFQS…VVGK), 1985 to 2024 (TAVD…VIFP), 2026 to 2055 (LIPT…SALY), 2057 to 2095 (RLSI…SVND), 2097 to 2134 (EGLH…KTVL), 2138 to 2175 (VYIP…KVDK), 2206 to 2243 (RGPN…KTPA), 2250 to 2286 (VSVI…KIPM), 2290 to 2328 (PFIP…HQPR), 2347 to 2384 (GVKT…EEML), 2392 to 2429 (VAYA…ETGK), 2450 to 2487 (GLID…LEGE), and 2506 to 2546 (ENIN…FKFD). The tract at residues 1330–1641 (LMEKLLNPTV…GALVERLGEE (312 aa)) is EF3-like region. The tract at residues 2207-2356 (GPNCVLPIFL…GVKTAMLKAL (150 aa)) is RWDBD region.

Belongs to the GCN1 family. As to quaternary structure, interacts (via N- and C-terminus) with GCN2 (via N-terminal RWD domain); this interaction stimulates GCN2 kinase activity in a GCN20-dependent manner in response to amino acid starvation. Interacts (via C-terminus) with GCN20 (via N-terminus); this interaction stimulates GCN2 kinase activity in response to amino acid starvation. The GCN1-GCN20 complex interacts with GCN2 on translating ribosomes in amino acid-starved cells; GCN1 may bind near the ribosomal A-site and promotes the transfer of uncharged tRNAs from the A-site to the tRNA-binding domain in GCN2 for its subsequent kinase activation, and hence allowing GCN4 translational activation and derepression of amino acid biosynthetic genes. Interacts (via C-terminus) with YIH1 (via N-terminus); this interaction reduces the GCN1-GCN20 complex formation and prevents the interaction of GCN1 with GCN2 and GCN2 kinase activation in amino acid-starved cells. Interacts with GIR2; this interaction prevents the interaction of GCN1 with GCN2 and GCN2 kinase activation in amino acid-starved cells. Interacts (via middle region) with RPS10A and RPS10B; these interactions are direct and promote GCN2 kinase activation. Associates (via N-terminus) with ribosomes; this association is stimulated in a ATP- and GCN20-dependent manner and is necessary to activate GCN2 kinase activity.

It localises to the cytoplasm. In terms of biological role, ribosome collision sensor that activates a translation quality control pathway when a ribosome has stalled during translation. Directly binds to the ribosome and acts as a sentinel for colliding ribosomes. GCN1 also acts as a positive activator of the integrated stress response (ISR) by mediating activation of GCN2 in response to low amino acid, carbon, or purine availability. Component of the GCN1-GCN20 complex that forms a complex with GCN2 on translating ribosomes: during this process, GCN1 acts as a chaperone to facilitate delivery of uncharged tRNAs that enter the A-site of ribosomes to the tRNA-binding domain of GCN2, and hence stimulating GCN2 kinase activity, leading to phosphorylation of eukaryotic translation initiation factor 2 (eIF-2-alpha/SUI2). eIF-2-alpha/SUI2 phosphorylation converts eIF-2-alpha/SUI2 into a global protein synthesis inhibitor, leading to a global attenuation of cap-dependent translation, and thus to a reduced overall utilization of amino acids, while concomitantly initiating the preferential translation of ISR-specific mRNAs, such as the transcriptional activator GCN4, and hence allowing GCN4-mediated reprogramming of amino acid biosynthetic gene expression to alleviate nutrient depletion. This is eIF-2-alpha kinase activator GCN1 from Saccharomyces cerevisiae (strain ATCC 204508 / S288c) (Baker's yeast).